The sequence spans 392 residues: Erythronate-4-phosphate dehydrogenase (392 aa).

Residues Ser-48 and Thr-69 each contribute to the substrate site. An NAD(+)-binding site is contributed by Asp-149. Arg-215 is an active-site residue. Asp-239 lines the NAD(+) pocket. The active site involves Glu-244. His-261 acts as the Proton donor in catalysis. Residue Gly-264 coordinates NAD(+). Tyr-265 lines the substrate pocket.

It belongs to the D-isomer specific 2-hydroxyacid dehydrogenase family. PdxB subfamily. In terms of assembly, homodimer.

It localises to the cytoplasm. The enzyme catalyses 4-phospho-D-erythronate + NAD(+) = (R)-3-hydroxy-2-oxo-4-phosphooxybutanoate + NADH + H(+). Its pathway is cofactor biosynthesis; pyridoxine 5'-phosphate biosynthesis; pyridoxine 5'-phosphate from D-erythrose 4-phosphate: step 2/5. In terms of biological role, catalyzes the oxidation of erythronate-4-phosphate to 3-hydroxy-2-oxo-4-phosphonooxybutanoate. The chain is Erythronate-4-phosphate dehydrogenase from Salinibacter ruber (strain DSM 13855 / M31).